We begin with the raw amino-acid sequence, 1188 residues long: DNA-directed RNA polymerase subunit beta (1188 aa).

Belongs to the RNA polymerase beta chain family. As to quaternary structure, the RNAP catalytic core consists of 2 alpha, 1 beta, 1 beta' and 1 omega subunit. When a sigma factor is associated with the core the holoenzyme is formed, which can initiate transcription.

It catalyses the reaction RNA(n) + a ribonucleoside 5'-triphosphate = RNA(n+1) + diphosphate. Functionally, DNA-dependent RNA polymerase catalyzes the transcription of DNA into RNA using the four ribonucleoside triphosphates as substrates. This Streptococcus gordonii (strain Challis / ATCC 35105 / BCRC 15272 / CH1 / DL1 / V288) protein is DNA-directed RNA polymerase subunit beta.